The chain runs to 115 residues: NADH-ubiquinone oxidoreductase chain 3 (115 aa).

3 helical membrane passes run leucine 4–leucine 24, phenylalanine 55–methionine 75, and threonine 86–tryptophan 106.

The protein belongs to the complex I subunit 3 family. As to quaternary structure, core subunit of respiratory chain NADH dehydrogenase (Complex I) which is composed of 45 different subunits. Interacts with TMEM186. Interacts with TMEM242.

The protein localises to the mitochondrion inner membrane. It carries out the reaction a ubiquinone + NADH + 5 H(+)(in) = a ubiquinol + NAD(+) + 4 H(+)(out). In terms of biological role, core subunit of the mitochondrial membrane respiratory chain NADH dehydrogenase (Complex I) which catalyzes electron transfer from NADH through the respiratory chain, using ubiquinone as an electron acceptor. Essential for the catalytic activity of complex I. This Nelsonia neotomodon (Diminutive woodrat) protein is NADH-ubiquinone oxidoreductase chain 3.